A 314-amino-acid chain; its full sequence is tRNA dimethylallyltransferase (314 aa).

16 to 23 (GPTGVGKT) is an ATP binding site. 18–23 (TGVGKT) provides a ligand contact to substrate. Residues 41 to 44 (DSMQ) are interaction with substrate tRNA.

It belongs to the IPP transferase family. As to quaternary structure, monomer. The cofactor is Mg(2+).

It catalyses the reaction adenosine(37) in tRNA + dimethylallyl diphosphate = N(6)-dimethylallyladenosine(37) in tRNA + diphosphate. In terms of biological role, catalyzes the transfer of a dimethylallyl group onto the adenine at position 37 in tRNAs that read codons beginning with uridine, leading to the formation of N6-(dimethylallyl)adenosine (i(6)A). This Desulfosudis oleivorans (strain DSM 6200 / JCM 39069 / Hxd3) (Desulfococcus oleovorans) protein is tRNA dimethylallyltransferase.